Here is a 460-residue protein sequence, read N- to C-terminus: Dynactin subunit 4 (460 aa).

Ala-2 is subject to N-acetylalanine. The stretch at 152 to 172 forms a coiled coil; sequence QQLAQKEKVERDRKKLARRRN. Ser-196 is subject to Phosphoserine. Lys-215 is covalently cross-linked (Glycyl lysine isopeptide (Lys-Gly) (interchain with G-Cter in SUMO2)). At Thr-407 the chain carries Phosphothreonine.

This sequence belongs to the dynactin subunit 4 family. Subunit of dynactin, a multiprotein complex part of a tripartite complex with dynein and a adapter, such as BICDL1, BICD2 or HOOK3. The dynactin complex is built around ACTR1A/ACTB filament and consists of an actin-related filament composed of a shoulder domain, a pointed end and a barbed end. Its length is defined by its flexible shoulder domain. The soulder is composed of 2 DCTN1 subunits, 4 DCTN2 and 2 DCTN3. The 4 DCNT2 (via N-terminus) bind the ACTR1A filament and act as molecular rulers to determine the length. The pointed end is important for binding dynein-dynactin cargo adapters. Consists of 4 subunits: ACTR10, DCNT4, DCTN5 and DCTN6. The barbed end is composed of a CAPZA1:CAPZB heterodimers, which binds ACTR1A/ACTB filament and dynactin and stabilizes dynactin. Interacts with ATP7B, but not ATP7A, in a copper-dependent manner. Interacts with ANK2; this interaction is required for localization at costameres. Interacts with N4BP2L1.

It localises to the cytoplasm. The protein resides in the cytoskeleton. It is found in the microtubule organizing center. The protein localises to the centrosome. Its subcellular location is the stress fiber. It localises to the cell cortex. The protein resides in the myofibril. It is found in the sarcomere. Its function is as follows. Part of the dynactin complex that activates the molecular motor dynein for ultra-processive transport along microtubules. This is Dynactin subunit 4 (DCTN4) from Pongo abelii (Sumatran orangutan).